Reading from the N-terminus, the 189-residue chain is UPF0301 protein CTLon_0458 (189 aa).

This sequence belongs to the UPF0301 (AlgH) family.

The chain is UPF0301 protein CTLon_0458 from Chlamydia trachomatis serovar L2b (strain UCH-1/proctitis).